The chain runs to 321 residues: Gap junction delta-2 protein (321 aa).

Residues 1–19 (MGEWTILERLLEAAVQQHS) lie on the Cytoplasmic side of the membrane. A helical transmembrane segment spans residues 20–42 (TMIGRILLTVVVIFRILIVAIVG). The Extracellular segment spans residues 43–75 (ETVYDDEQTMFVCNTLQPGCNQACYDRAFPISH). Residues 76-98 (IRYWVFQIIMVCTPSLCFITYSV) form a helical membrane-spanning segment. Over 99 to 197 (HQSAKQRERR…KLRRQEGISR (99 aa)) the chain is Cytoplasmic. Residues 120-141 (PAESIGGPGGTGGGGSGGSKRE) are disordered. The segment covering 125–137 (GGPGGTGGGGSGG) has biased composition (gly residues). A helical membrane pass occupies residues 198-220 (FYIIQVVFRNALEIGFLVGQYFL). Over 221–252 (YGFSVPGLYECNRYPCIKEVECYVSRPTEKTV) the chain is Extracellular. A helical transmembrane segment spans residues 253–275 (FLVFMFAVSGICVVLNLAELNHL). The Cytoplasmic portion of the chain corresponds to 276–321 (GWRKIKLAVRGAQAKRKSVYEIRNKDLPRVSVPNFGRTQSSDSAYV).

This sequence belongs to the connexin family. Delta-type subfamily. As to quaternary structure, a connexon is composed of a hexamer of connexins. In terms of tissue distribution, highly expressed in neurons.

It localises to the cell membrane. It is found in the cell junction. The protein localises to the gap junction. Functionally, one gap junction consists of a cluster of closely packed pairs of transmembrane channels, the connexons, through which materials of low MW diffuse from one cell to a neighboring cell. The chain is Gap junction delta-2 protein (Gjd2) from Rattus norvegicus (Rat).